The sequence spans 113 residues: MFNQVMLVGRLTKDPDLRYTSAGAAVAHVTLAVNRSFKNASGEIEADYVNCTLWRKTAENTALYCQKGSLVGVSGRIQTRSYENEEGVNVYVTEVLADTVRFMDPKPREKAAD.

The 104-residue stretch at 1 to 104 folds into the SSB domain; it reads MFNQVMLVGR…VLADTVRFMD (104 aa). Phosphotyrosine is present on Y82.

In terms of assembly, homotetramer. Phosphorylated by YwqD, which increases ssDNA affinity; dephosphorylated by YwqE.

It is found in the cytoplasm. Its function is as follows. Not essential for replication of the chromosome, but is required for optimal competence. Binds ssDNA, binding is facilitated by DprA, acts as an accessory factor for homologous DNA strand exchange. This Bacillus subtilis (strain 168) protein is Single-stranded DNA-binding protein B (ssbB).